Here is a 93-residue protein sequence, read N- to C-terminus: Conotoxin F_Vc1 (93 aa).

Residues 1-22 form the signal peptide; it reads MQRGAVLLGVVAFLALWPQAGA. Positions 23-33 are excised as a propeptide; sequence EPYNLNDPDVR.

This sequence belongs to the conotoxin F superfamily. In terms of processing, contains 4 disulfide bonds. As to expression, expressed by the venom duct.

It localises to the secreted. The chain is Conotoxin F_Vc1 from Conus victoriae (Queen Victoria cone).